The chain runs to 307 residues: Ribosomal RNA large subunit methyltransferase F (307 aa).

Belongs to the methyltransferase superfamily. METTL16/RlmF family.

It localises to the cytoplasm. The enzyme catalyses adenosine(1618) in 23S rRNA + S-adenosyl-L-methionine = N(6)-methyladenosine(1618) in 23S rRNA + S-adenosyl-L-homocysteine + H(+). Functionally, specifically methylates the adenine in position 1618 of 23S rRNA. The polypeptide is Ribosomal RNA large subunit methyltransferase F (Bacteroides thetaiotaomicron (strain ATCC 29148 / DSM 2079 / JCM 5827 / CCUG 10774 / NCTC 10582 / VPI-5482 / E50)).